Reading from the N-terminus, the 288-residue chain is 30 kDa spicule matrix protein (288 aa).

An N-terminal signal peptide occupies residues 1–20 (MRCFVYVLVCVVASVSYSRA). The C-type lectin domain occupies 93–163 (ANMYCGQMHP…YTNWEGMVAP (71 aa)). N-linked (GlcNAc...) asparagine glycosylation is present at Asn-103.

Spines and tube feet.

Matrix protein of the sea urchin embryo spicule. The function of the matrix proteins is to direct crystal growth in certain orientations and inhibit growth in others. This chain is 30 kDa spicule matrix protein (SM30), found in Hemicentrotus pulcherrimus (Sea urchin).